The primary structure comprises 402 residues: CCA-adding enzyme (402 aa).

The ATP site is built by G32 and R35. Residues G32 and R35 each contribute to the CTP site. D45 and D47 together coordinate Mg(2+). 5 residues coordinate ATP: R116, D159, R162, R165, and R168. CTP contacts are provided by R116, D159, R162, R165, and R168.

The protein belongs to the tRNA nucleotidyltransferase/poly(A) polymerase family. Bacterial CCA-adding enzyme type 3 subfamily. In terms of assembly, homodimer. Requires Mg(2+) as cofactor.

It catalyses the reaction a tRNA precursor + 2 CTP + ATP = a tRNA with a 3' CCA end + 3 diphosphate. The catalysed reaction is a tRNA with a 3' CCA end + 2 CTP + ATP = a tRNA with a 3' CCACCA end + 3 diphosphate. Its function is as follows. Catalyzes the addition and repair of the essential 3'-terminal CCA sequence in tRNAs without using a nucleic acid template. Adds these three nucleotides in the order of C, C, and A to the tRNA nucleotide-73, using CTP and ATP as substrates and producing inorganic pyrophosphate. tRNA 3'-terminal CCA addition is required both for tRNA processing and repair. Also involved in tRNA surveillance by mediating tandem CCA addition to generate a CCACCA at the 3' terminus of unstable tRNAs. While stable tRNAs receive only 3'-terminal CCA, unstable tRNAs are marked with CCACCA and rapidly degraded. This Streptococcus pyogenes serotype M6 (strain ATCC BAA-946 / MGAS10394) protein is CCA-adding enzyme.